The following is a 590-amino-acid chain: Cytidine monophosphate-N-acetylneuraminic acid hydroxylase (590 aa).

One can recognise a Rieske domain in the interval 14–112 (LSPVEVANLK…VEMDENNGLL (99 aa)). [2Fe-2S] cluster-binding residues include Cys54, His56, Cys75, and His78.

The protein belongs to the CMP-Neu5Ac hydroxylase family. Requires [2Fe-2S] cluster as cofactor.

It is found in the cytoplasm. The enzyme catalyses CMP-N-acetyl-beta-neuraminate + 2 Fe(II)-[cytochrome b5] + O2 + 2 H(+) = CMP-N-glycoloyl-beta-neuraminate + 2 Fe(III)-[cytochrome b5] + H2O. Its pathway is amino-sugar metabolism; N-acetylneuraminate metabolism. Sialic acids are components of carbohydrate chains of glycoconjugates and are involved in cell-cell recognition and cell-pathogen interactions. Catalyzes the conversion of CMP-N-acetylneuraminic acid (CMP-Neu5Ac) into its hydroxylated derivative CMP-N-glycolylneuraminic acid (CMP-Neu5Gc), a sialic acid abundantly expressed at the surface of many cells. This is Cytidine monophosphate-N-acetylneuraminic acid hydroxylase (CMAH) from Macaca mulatta (Rhesus macaque).